The primary structure comprises 343 residues: Anthranilate phosphoribosyltransferase (343 aa).

5-phospho-alpha-D-ribose 1-diphosphate contacts are provided by residues Gly84, 87–88 (GD), Thr92, 94–97 (NIST), 112–120 (KHGNRGVSS), and Ser124. Gly84 provides a ligand contact to anthranilate. Ser96 contributes to the Mg(2+) binding site. Anthranilate is bound at residue Asn115. Arg170 serves as a coordination point for anthranilate. Asp229 and Glu230 together coordinate Mg(2+).

The protein belongs to the anthranilate phosphoribosyltransferase family. As to quaternary structure, homodimer. Mg(2+) is required as a cofactor.

It carries out the reaction N-(5-phospho-beta-D-ribosyl)anthranilate + diphosphate = 5-phospho-alpha-D-ribose 1-diphosphate + anthranilate. The protein operates within amino-acid biosynthesis; L-tryptophan biosynthesis; L-tryptophan from chorismate: step 2/5. Its function is as follows. Catalyzes the transfer of the phosphoribosyl group of 5-phosphorylribose-1-pyrophosphate (PRPP) to anthranilate to yield N-(5'-phosphoribosyl)-anthranilate (PRA). The sequence is that of Anthranilate phosphoribosyltransferase from Burkholderia pseudomallei (strain 1106a).